Here is a 300-residue protein sequence, read N- to C-terminus: Haloalkane dehalogenase (300 aa).

Positions 32–155 constitute an AB hydrolase-1 domain; it reads AIVFQHGNPT…PAVRGVFQGF (124 aa). Asp-109 functions as the Nucleophile in the catalytic mechanism. Catalysis depends on Glu-133, which acts as the Proton donor. His-273 acts as the Proton acceptor in catalysis.

This sequence belongs to the haloalkane dehalogenase family. Type 2 subfamily. Monomer.

The catalysed reaction is 1-haloalkane + H2O = a halide anion + a primary alcohol + H(+). Catalyzes hydrolytic cleavage of carbon-halogen bonds in halogenated aliphatic compounds, leading to the formation of the corresponding primary alcohols, halide ions and protons. This chain is Haloalkane dehalogenase, found in Mycobacterium bovis (strain BCG / Pasteur 1173P2).